The sequence spans 135 residues: Small ribosomal subunit protein uS11 (135 aa).

Positions 1–22 are disordered; sequence MPPKSRTAAGAKKVRRKEKKNV.

Belongs to the universal ribosomal protein uS11 family. As to quaternary structure, part of the 30S ribosomal subunit. Interacts with proteins S7 and S18. Binds to IF-3.

Its function is as follows. Located on the platform of the 30S subunit, it bridges several disparate RNA helices of the 16S rRNA. Forms part of the Shine-Dalgarno cleft in the 70S ribosome. The chain is Small ribosomal subunit protein uS11 from Nocardioides sp. (strain ATCC BAA-499 / JS614).